The following is a 206-amino-acid chain: Small ribosomal subunit protein uS4 (206 aa).

Positions Gln96 to Val156 constitute an S4 RNA-binding domain.

Belongs to the universal ribosomal protein uS4 family. In terms of assembly, part of the 30S ribosomal subunit. Contacts protein S5. The interaction surface between S4 and S5 is involved in control of translational fidelity.

One of the primary rRNA binding proteins, it binds directly to 16S rRNA where it nucleates assembly of the body of the 30S subunit. In terms of biological role, with S5 and S12 plays an important role in translational accuracy. This Alteromonas mediterranea (strain DSM 17117 / CIP 110805 / LMG 28347 / Deep ecotype) protein is Small ribosomal subunit protein uS4.